The primary structure comprises 115 residues: U31-theraphotoxin-Cg1a (115 aa).

The N-terminal stretch at 1–18 is a signal peptide; that stretch reads MKLCVIIIASLMVASVSG. A propeptide spanning residues 19-51 is cleaved from the precursor; it reads RLRKIKGTELDKKMLLEKLGHGMDIRFEETPRA. 4 disulfide bridges follow: cysteine 52-cysteine 67, cysteine 60-cysteine 73, cysteine 64-cysteine 113, and cysteine 66-cysteine 86.

It belongs to the neurotoxin 03 (Tx2) family. 02 subfamily. In terms of tissue distribution, expressed by the venom gland.

It is found in the secreted. Probable ion channel inhibitor. This is U31-theraphotoxin-Cg1a from Chilobrachys guangxiensis (Chinese earth tiger tarantula).